Here is a 200-residue protein sequence, read N- to C-terminus: ATP synthase subunit s, mitochondrial (200 aa).

A mitochondrion-targeting transit peptide spans 1–25; sequence MMMFGKISRQLCSLKKIPWSCDSRY. The interval 1-61 is N-terminal domain; the sequence is MMMFGKISRQ…SEWLLRCGAK (61 aa). Glycine 59 is a Mg(2+) binding site. LRR repeat units follow at residues 62–87, 88–116, 117–141, and 142–173; these read VRYC…RYKI, QAID…KITL, CKCH…KSLL, and ELEI…LSDL. Mg(2+) is bound at residue threonine 93.

It belongs to the ATP synthase subunit s family. In terms of assembly, homotetramer. Associates with ATP synthase.

The protein localises to the mitochondrion. The protein resides in the mitochondrion inner membrane. Functionally, involved in regulation of mitochondrial membrane ATP synthase. Necessary for H(+) conduction of ATP synthase. Facilitates energy-driven catalysis of ATP synthesis by blocking a proton leak through an alternative proton exit pathway. The chain is ATP synthase subunit s, mitochondrial (Dmac2l) from Mus musculus (Mouse).